The primary structure comprises 637 residues: Threonine--tRNA ligase (637 aa).

The TGS domain maps to 1–65; that stretch reads MIAIQLPDGS…EADEALSIIT (65 aa). The interval 246 to 537 is catalytic; the sequence is DHRKLGRELD…LIEEHAGALP (292 aa). Residues C337, H388, and H514 each coordinate Zn(2+).

Belongs to the class-II aminoacyl-tRNA synthetase family. Homodimer. It depends on Zn(2+) as a cofactor.

Its subcellular location is the cytoplasm. It catalyses the reaction tRNA(Thr) + L-threonine + ATP = L-threonyl-tRNA(Thr) + AMP + diphosphate + H(+). Catalyzes the attachment of threonine to tRNA(Thr) in a two-step reaction: L-threonine is first activated by ATP to form Thr-AMP and then transferred to the acceptor end of tRNA(Thr). Also edits incorrectly charged L-seryl-tRNA(Thr). The sequence is that of Threonine--tRNA ligase from Leptothrix cholodnii (strain ATCC 51168 / LMG 8142 / SP-6) (Leptothrix discophora (strain SP-6)).